The sequence spans 409 residues: Ubiquitin-associated domain-containing protein 1 (409 aa).

Residue M1 is modified to N-acetylmethionine. In terms of domain architecture, Ubiquitin-like spans 14–98 (LRLHICAADG…LLLIKKRVPS (85 aa)). A disordered region spans residues 101 to 122 (PKMADVSAEEKKKQEQKAPDKD). Residues 108 to 122 (AEEKKKQEQKAPDKD) are compositionally biased toward basic and acidic residues. The 45-residue stretch at 187–231 (DEDERVDETALRQLTEMGFPESRASKALRLNHMSVPQAMEWLIEH) folds into the UBA 1 domain. The segment at 239–273 (TPLPGHAAQAGASAAATTSSTSSEAAVGTSVEDEE) is disordered. Over residues 245–268 (AAQAGASAAATTSSTSSEAAVGTS) the composition is skewed to low complexity. The UBA 2 domain maps to 292–332 (RADARAVISLMEMGFDEKEVIDALRVNNNQQNAACEWLLGD). Residues 357-396 (NPVVQLGLTNPKTLLAFEDMLENPLNSTQWMNDPETGPVM) form the STI1 domain.

In terms of assembly, component of the KPC complex composed of RNF123/KPC1 and UBAC1/KPC2. Interacts (via ubiquitin-like domain) with RNF123. Interacts (via ubiquitin-like and UBA domains) with the proteasome via its N-terminal domain.

It localises to the cytoplasm. Its pathway is protein modification; protein ubiquitination. Functionally, non-catalytic component of the KPC complex, a E3 ubiquitin-protein ligase complex that mediates polyubiquitination of target proteins, such as CDKN1B and NFKB1. The KPC complex catalyzes polyubiquitination and proteasome-mediated degradation of CDKN1B during G1 phase of the cell cycle. The KPC complex also acts as a key regulator of the NF-kappa-B signaling by promoting maturation of the NFKB1 component of NF-kappa-B by catalyzing ubiquitination of the NFKB1 p105 precursor. Within the KPC complex, UBAC1 acts as an adapter that promotes the transfer of target proteins that have been polyubiquitinated by RNF123/KPC1 to the 26S proteasome. The polypeptide is Ubiquitin-associated domain-containing protein 1 (Ubac1) (Mus musculus (Mouse)).